The sequence spans 291 residues: Undecaprenyl-diphosphatase (291 aa).

8 helical membrane passes run 1 to 21 (MIII…LTEF), 48 to 68 (SAFT…AWVF), 100 to 120 (LHVL…DDFI), 124 to 144 (LFSV…MIIA), 160 to 180 (INYV…WPGF), 201 to 221 (SDFT…LSLV), 230 to 250 (AHIP…LIAI), and 270 to 290 (IVLV…QGIS).

The protein belongs to the UppP family.

It localises to the cell membrane. The enzyme catalyses di-trans,octa-cis-undecaprenyl diphosphate + H2O = di-trans,octa-cis-undecaprenyl phosphate + phosphate + H(+). Its function is as follows. Catalyzes the dephosphorylation of undecaprenyl diphosphate (UPP). Confers resistance to bacitracin. The chain is Undecaprenyl-diphosphatase from Staphylococcus haemolyticus (strain JCSC1435).